An 82-amino-acid chain; its full sequence is Small ribosomal subunit protein bS16 (82 aa).

Belongs to the bacterial ribosomal protein bS16 family.

In Marinomonas sp. (strain MWYL1), this protein is Small ribosomal subunit protein bS16.